A 485-amino-acid polypeptide reads, in one-letter code: Glutamate--tRNA ligase (485 aa).

The short motif at 11–21 is the 'HIGH' region element; sequence PSPTGYMHVGN. Zn(2+) is bound by residues C108, C110, C135, and D137. The 'KMSKS' region motif lies at 252-256; sequence KLSKR. K255 provides a ligand contact to ATP.

It belongs to the class-I aminoacyl-tRNA synthetase family. Glutamate--tRNA ligase type 1 subfamily. As to quaternary structure, monomer. Zn(2+) serves as cofactor.

It localises to the cytoplasm. The enzyme catalyses tRNA(Glu) + L-glutamate + ATP = L-glutamyl-tRNA(Glu) + AMP + diphosphate. Functionally, catalyzes the attachment of glutamate to tRNA(Glu) in a two-step reaction: glutamate is first activated by ATP to form Glu-AMP and then transferred to the acceptor end of tRNA(Glu). In Clostridium botulinum (strain ATCC 19397 / Type A), this protein is Glutamate--tRNA ligase.